We begin with the raw amino-acid sequence, 405 residues long: Exodeoxyribonuclease 7 large subunit (405 aa).

The protein belongs to the XseA family. As to quaternary structure, heterooligomer composed of large and small subunits.

Its subcellular location is the cytoplasm. It catalyses the reaction Exonucleolytic cleavage in either 5'- to 3'- or 3'- to 5'-direction to yield nucleoside 5'-phosphates.. Bidirectionally degrades single-stranded DNA into large acid-insoluble oligonucleotides, which are then degraded further into small acid-soluble oligonucleotides. The sequence is that of Exodeoxyribonuclease 7 large subunit from Syntrophomonas wolfei subsp. wolfei (strain DSM 2245B / Goettingen).